Reading from the N-terminus, the 365-residue chain is Pyridoxal reductase, chloroplastic (365 aa).

The N-terminal 15 residues, methionine 1–asparagine 15, are a transit peptide targeting the chloroplast. Tyrosine 94 functions as the Proton donor in the catalytic mechanism.

Belongs to the aldo/keto reductase family. Monomer. As to expression, expressed in cotyledons, embryos, flowers, shoots, roots and seeds.

It is found in the plastid. The protein localises to the chloroplast. The catalysed reaction is pyridoxine + NADP(+) = pyridoxal + NADPH + H(+). The protein operates within cofactor degradation; B6 vitamer degradation; pyridoxal from pyridoxine (dehydrogenase route): step 1/1. Functionally, catalyzes the reduction of pyridoxal (PL) with NADPH and oxidation of pyridoxine (PN) with NADP(+). Involved in the PLP salvage pathway. The sequence is that of Pyridoxal reductase, chloroplastic (PLR1) from Arabidopsis thaliana (Mouse-ear cress).